We begin with the raw amino-acid sequence, 327 residues long: Ribose 1,5-bisphosphate isomerase (327 aa).

Residues 25 to 28 (RGAA) and Arg-68 each bind substrate. Cys-133 acts as the Proton acceptor in catalysis. The active-site Proton donor is the Asp-202. Substrate contacts are provided by residues 212–213 (NK) and Lys-238.

It belongs to the eIF-2B alpha/beta/delta subunits family. R15P isomerase subfamily.

The enzyme catalyses alpha-D-ribose 1,5-bisphosphate = D-ribulose 1,5-bisphosphate. Isomerase involved in the non-carboxylating pentose bisphosphate pathway, a nucleoside degradation pathway present in some halophilic archaea. Catalyzes the isomerization of ribose 1,5-bisphosphate (R15P) to ribulose 1,5-bisphosphate (RuBP). This Haloterrigena turkmenica (strain ATCC 51198 / DSM 5511 / JCM 9101 / NCIMB 13204 / VKM B-1734 / 4k) (Halococcus turkmenicus) protein is Ribose 1,5-bisphosphate isomerase.